The sequence spans 663 residues: MNIKQKIDNLRQEIDNWNYRYYVIYQPIVSDFEFDKKLKELEKLEAQYPEYYDYYSPTQRIGNDINNNFAQINHIYPMLSLSNTYSWEGINDFYNRIKKILNENFVIACELKYDGVSISLIYESGLLLRAVTRGDGTTGDDVTTNIRTVKSIPLKLYGNNYPRFFEIRGEIVFPWAAFNKINKERIENSEPPFANPRNAAAGTLKTLNPQVVSQRNLDAYLYQLLGDNLSSDSHYENLQLAQGWGFKVSNIIKCCKTIDEIENFINYWGKWKKSLPFAVDGVVLKVDSIRQQSLLGRIAKSPRWAIAYKFQSETVKTTLHSVDFQVGRTGIITPIANLEPVLLSGTIVKRASLHNEDIINALDLHIGDQCYVEKGGEIIPKITGINKEARLTFGNKAVNFPKNCPACNTPLIRFQNETAYYCPNYTQCKPQIKGMITHFASRKAMNINVGEETIETFYRAGLVRDIADLYEIKIDDILQLKRWAEKSAINFVESVQQSKQVPYERVLYGLGIHFVGEVVAKRLAKAFPTIEQLSIANNEQLTTIDGIGNQIAQSVIQYFSNENNLQLIRRLKLYGLQLFTIQKIFIDNKLAGKTFIISGIFRKYSRDKYKELIENNGGKNVSSLSAKTDFILSGVNMGPVKLIKAQRFGIKIISEDEFLKMIE.

Residues 31-35 (DFEFD), 80-81 (SL), and glutamate 110 each bind NAD(+). Residue lysine 112 is the N6-AMP-lysine intermediate of the active site. NAD(+) is bound by residues arginine 133, glutamate 170, lysine 285, and lysine 309. Cysteine 404, cysteine 407, cysteine 422, and cysteine 428 together coordinate Zn(2+). The region spanning 585–663 (FIDNKLAGKT…SEDEFLKMIE (79 aa)) is the BRCT domain.

The protein belongs to the NAD-dependent DNA ligase family. LigA subfamily. Mg(2+) serves as cofactor. It depends on Mn(2+) as a cofactor.

The enzyme catalyses NAD(+) + (deoxyribonucleotide)n-3'-hydroxyl + 5'-phospho-(deoxyribonucleotide)m = (deoxyribonucleotide)n+m + AMP + beta-nicotinamide D-nucleotide.. Its function is as follows. DNA ligase that catalyzes the formation of phosphodiester linkages between 5'-phosphoryl and 3'-hydroxyl groups in double-stranded DNA using NAD as a coenzyme and as the energy source for the reaction. It is essential for DNA replication and repair of damaged DNA. The polypeptide is DNA ligase (Azobacteroides pseudotrichonymphae genomovar. CFP2).